The chain runs to 427 residues: Glutamate-1-semialdehyde 2,1-aminomutase (427 aa).

K265 carries the post-translational modification N6-(pyridoxal phosphate)lysine.

This sequence belongs to the class-III pyridoxal-phosphate-dependent aminotransferase family. HemL subfamily. Homodimer. Pyridoxal 5'-phosphate is required as a cofactor.

Its subcellular location is the cytoplasm. It carries out the reaction (S)-4-amino-5-oxopentanoate = 5-aminolevulinate. It functions in the pathway porphyrin-containing compound metabolism; protoporphyrin-IX biosynthesis; 5-aminolevulinate from L-glutamyl-tRNA(Glu): step 2/2. The chain is Glutamate-1-semialdehyde 2,1-aminomutase from Photorhabdus laumondii subsp. laumondii (strain DSM 15139 / CIP 105565 / TT01) (Photorhabdus luminescens subsp. laumondii).